The chain runs to 259 residues: Putative hydro-lyase Rxyl_2409 (259 aa).

Residues 1 to 24 are disordered; sequence MGAPGAAEARERIRRGEHAGPTAG. The segment covering 8-18 has biased composition (basic and acidic residues); that stretch reads EARERIRRGEH.

This sequence belongs to the D-glutamate cyclase family.

This chain is Putative hydro-lyase Rxyl_2409, found in Rubrobacter xylanophilus (strain DSM 9941 / JCM 11954 / NBRC 16129 / PRD-1).